We begin with the raw amino-acid sequence, 193 residues long: MNIPIPYVMEQTRYGERSYDIYSRLLKDRIIFIGDEITDTLANSVTAQLLFLASTDPEKDISIYINSPGGSVSAGFAILDTMLYIKPDIQTICTGMAASFAAVLLVGGTKGKRCALPHAEVMIHQPHGGMKGQASDMDIYAQRILKQRKEINHFIAERTGQTPDKIATDSERDYFMSAAEAKDYGVIDNILPV.

Ser-99 serves as the catalytic Nucleophile. His-124 is a catalytic residue.

It belongs to the peptidase S14 family. As to quaternary structure, fourteen ClpP subunits assemble into 2 heptameric rings which stack back to back to give a disk-like structure with a central cavity, resembling the structure of eukaryotic proteasomes.

It localises to the cytoplasm. The catalysed reaction is Hydrolysis of proteins to small peptides in the presence of ATP and magnesium. alpha-casein is the usual test substrate. In the absence of ATP, only oligopeptides shorter than five residues are hydrolyzed (such as succinyl-Leu-Tyr-|-NHMec, and Leu-Tyr-Leu-|-Tyr-Trp, in which cleavage of the -Tyr-|-Leu- and -Tyr-|-Trp bonds also occurs).. Its function is as follows. Cleaves peptides in various proteins in a process that requires ATP hydrolysis. Has a chymotrypsin-like activity. Plays a major role in the degradation of misfolded proteins. The chain is ATP-dependent Clp protease proteolytic subunit 1 from Shouchella clausii (strain KSM-K16) (Alkalihalobacillus clausii).